A 471-amino-acid chain; its full sequence is ATP synthase subunit beta (471 aa).

152 to 159 (GGAGVGKT) lines the ATP pocket.

The protein belongs to the ATPase alpha/beta chains family. F-type ATPases have 2 components, CF(1) - the catalytic core - and CF(0) - the membrane proton channel. CF(1) has five subunits: alpha(3), beta(3), gamma(1), delta(1), epsilon(1). CF(0) has three main subunits: a(1), b(2) and c(9-12). The alpha and beta chains form an alternating ring which encloses part of the gamma chain. CF(1) is attached to CF(0) by a central stalk formed by the gamma and epsilon chains, while a peripheral stalk is formed by the delta and b chains.

It is found in the cell membrane. The catalysed reaction is ATP + H2O + 4 H(+)(in) = ADP + phosphate + 5 H(+)(out). In terms of biological role, produces ATP from ADP in the presence of a proton gradient across the membrane. The catalytic sites are hosted primarily by the beta subunits. This chain is ATP synthase subunit beta, found in Herpetosiphon aurantiacus (strain ATCC 23779 / DSM 785 / 114-95).